Consider the following 185-residue polypeptide: Large ribosomal subunit protein uL5 (185 aa).

Belongs to the universal ribosomal protein uL5 family. Part of the 50S ribosomal subunit; contacts the 5S rRNA and probably tRNA. Forms a bridge to the 30S subunit in the 70S ribosome.

This is one of the proteins that bind and probably mediate the attachment of the 5S RNA into the large ribosomal subunit, where it forms part of the central protuberance. In the 70S ribosome it contacts protein S13 of the 30S subunit (bridge B1b), connecting the 2 subunits; this bridge is implicated in subunit movement. May contact the P site tRNA; the 5S rRNA and some of its associated proteins might help stabilize positioning of ribosome-bound tRNAs. This is Large ribosomal subunit protein uL5 from Haloquadratum walsbyi (strain DSM 16790 / HBSQ001).